A 724-amino-acid polypeptide reads, in one-letter code: Transcription factor dcp-66 (724 aa).

Polar residues-rich tracts occupy residues 1–12 (MAQVQQVPSSPM) and 56–70 (GAST…QLSP). Disordered stretches follow at residues 1 to 23 (MAQV…GNGL) and 55 to 129 (NGAS…KRRL). Over residues 85–95 (AQEKIKLKDDI) the composition is skewed to basic and acidic residues. A compositionally biased stretch (acidic residues) spans 105–119 (DDDDMEDEELGDEIN). A coiled-coil region spans residues 186-216 (EEQLRERLNMRREAENQLREEEAKLLVLRKM). Disordered regions lie at residues 328 to 361 (KELS…QITQ) and 523 to 590 (AAPA…QLQQ). A compositionally biased stretch (low complexity) spans 332–358 (AAETNASASASPAVQQSQQAQQPQQAQ). Polar residues-rich tracts occupy residues 527 to 541 (TSQT…TVSS) and 551 to 564 (IPSS…TQAV). Positions 565-590 (KTSTPIHSTPKSSSSSAKKTAAQLQQ) are enriched in low complexity.

Expressed at low levels in excretory cell, pharynx, vulva, and posterior neurons in adults. Strongly expressed in the excretory cell and more weakly in the pharynx in larva. Embryonic expression in the excretory cell.

The protein localises to the nucleus. Functionally, transcription factor which binds to the 5'-CCATACATTA-3' motif found in the promoter region of pgp-12 and activates its expression in the excretory cell. This chain is Transcription factor dcp-66, found in Caenorhabditis elegans.